A 309-amino-acid polypeptide reads, in one-letter code: Protein FdhE (309 aa).

It belongs to the FdhE family.

The protein localises to the cytoplasm. In terms of biological role, necessary for formate dehydrogenase activity. The protein is Protein FdhE of Salmonella arizonae (strain ATCC BAA-731 / CDC346-86 / RSK2980).